The following is a 52-amino-acid chain: NADH dehydrogenase [ubiquinone] 1 alpha subcomplex subunit 4 homolog (52 aa).

The helical transmembrane segment at 14-30 (LYPLGAAVATAVGFATY) threads the bilayer.

The protein belongs to the complex I NDUFA4 subunit family.

The protein localises to the mitochondrion inner membrane. Functionally, accessory subunit of the mitochondrial membrane respiratory chain NADH dehydrogenase (Complex I), that is believed to be not involved in catalysis. Complex I functions in the transfer of electrons from NADH to the respiratory chain. The immediate electron acceptor for the enzyme is believed to be ubiquinone. The polypeptide is NADH dehydrogenase [ubiquinone] 1 alpha subcomplex subunit 4 homolog (Schizosaccharomyces pombe (strain 972 / ATCC 24843) (Fission yeast)).